The sequence spans 97 residues: uncharacterized protein (97 aa).

Transmembrane regions (helical) follow at residues 5–25 (TLVA…SLSV), 27–47 (MVFV…LICY), and 77–97 (IISI…VFIL).

It is found in the membrane. This is an uncharacterized protein from Saccharomyces cerevisiae (strain ATCC 204508 / S288c) (Baker's yeast).